The primary structure comprises 187 residues: Large ribosomal subunit protein bL25 (187 aa).

It belongs to the bacterial ribosomal protein bL25 family. CTC subfamily. Part of the 50S ribosomal subunit; part of the 5S rRNA/L5/L18/L25 subcomplex. Contacts the 5S rRNA. Binds to the 5S rRNA independently of L5 and L18.

Its function is as follows. This is one of the proteins that binds to the 5S RNA in the ribosome where it forms part of the central protuberance. This chain is Large ribosomal subunit protein bL25, found in Tropheryma whipplei (strain Twist) (Whipple's bacillus).